We begin with the raw amino-acid sequence, 199 residues long: UPF0637 protein LVIS_1261 (199 aa).

Belongs to the UPF0637 family.

In Levilactobacillus brevis (strain ATCC 367 / BCRC 12310 / CIP 105137 / JCM 1170 / LMG 11437 / NCIMB 947 / NCTC 947) (Lactobacillus brevis), this protein is UPF0637 protein LVIS_1261.